Here is an 801-residue protein sequence, read N- to C-terminus: PR domain zinc finger protein 4 (801 aa).

In terms of domain architecture, SET spans 412–529; the sequence is KQLVLRQSIV…PENELLFYYS (118 aa). Residues 545 to 566 form a C2H2-type 1; atypical zinc finger; it reads HLCNCGKECNSYTEFKAHLTSH. 4 C2H2-type zinc fingers span residues 618 to 640, 646 to 668, 674 to 696, and 702 to 724; these read HKCD…LKIH, YRCT…MVIH, LKCD…VLIH, and IKCP…LNSH. The C2H2-type 6; atypical zinc-finger motif lies at 730-752; the sequence is YVCEKCTKAYLTKYHLTRHLKTC. The disordered stretch occupies residues 751–782; that stretch reads TCKGPTSSSSAPEEEEEDDSEEEDLADSVGTE. A compositionally biased stretch (acidic residues) spans 762–776; sequence PEEEEEDDSEEEDLA.

It belongs to the class V-like SAM-binding methyltransferase superfamily.

It is found in the nucleus. In terms of biological role, may function as a transcription factor involved in cell differentiation. This is PR domain zinc finger protein 4 (PRDM4) from Pongo abelii (Sumatran orangutan).